Consider the following 213-residue polypeptide: Peptidyl-tRNA hydrolase (213 aa).

TRNA is bound at residue tyrosine 15. Histidine 20 acts as the Proton acceptor in catalysis. Positions 66, 68, and 114 each coordinate tRNA. Positions histidine 187–glutamine 213 are disordered. Residues alanine 201 to glutamine 213 show a composition bias toward low complexity.

It belongs to the PTH family. In terms of assembly, monomer.

It localises to the cytoplasm. It carries out the reaction an N-acyl-L-alpha-aminoacyl-tRNA + H2O = an N-acyl-L-amino acid + a tRNA + H(+). Functionally, hydrolyzes ribosome-free peptidyl-tRNAs (with 1 or more amino acids incorporated), which drop off the ribosome during protein synthesis, or as a result of ribosome stalling. In terms of biological role, catalyzes the release of premature peptidyl moieties from peptidyl-tRNA molecules trapped in stalled 50S ribosomal subunits, and thus maintains levels of free tRNAs and 50S ribosomes. The sequence is that of Peptidyl-tRNA hydrolase from Paracidovorax citrulli (strain AAC00-1) (Acidovorax citrulli).